Consider the following 264-residue polypeptide: uncharacterized protein (264 aa).

A helical transmembrane segment spans residues Thr-182 to Leu-198.

The protein to E.coli YjiC.

It localises to the membrane. This is an uncharacterized protein from Escherichia coli (strain K12).